We begin with the raw amino-acid sequence, 521 residues long: GMP synthase [glutamine-hydrolyzing] (521 aa).

Residues 9-203 enclose the Glutamine amidotransferase type-1 domain; the sequence is KILILDFGSQ…ISGICQCEKN (195 aa). Cysteine 86 (nucleophile) is an active-site residue. Catalysis depends on residues histidine 177 and glutamate 179. Residues 204–396 form the GMPS ATP-PPase domain; it reads WTTDNIIAKL…LSIPPHIIYR (193 aa). 231–237 is an ATP binding site; sequence SGGVDSL.

As to quaternary structure, homodimer.

It carries out the reaction XMP + L-glutamine + ATP + H2O = GMP + L-glutamate + AMP + diphosphate + 2 H(+). It participates in purine metabolism; GMP biosynthesis; GMP from XMP (L-Gln route): step 1/1. Functionally, catalyzes the synthesis of GMP from XMP. This is GMP synthase [glutamine-hydrolyzing] from Ruthia magnifica subsp. Calyptogena magnifica.